The primary structure comprises 417 residues: NADH-quinone oxidoreductase subunit D (417 aa).

The protein belongs to the complex I 49 kDa subunit family. As to quaternary structure, NDH-1 is composed of 14 different subunits. Subunits NuoB, C, D, E, F, and G constitute the peripheral sector of the complex.

The protein localises to the cell inner membrane. The catalysed reaction is a quinone + NADH + 5 H(+)(in) = a quinol + NAD(+) + 4 H(+)(out). In terms of biological role, NDH-1 shuttles electrons from NADH, via FMN and iron-sulfur (Fe-S) centers, to quinones in the respiratory chain. The immediate electron acceptor for the enzyme in this species is believed to be ubiquinone. Couples the redox reaction to proton translocation (for every two electrons transferred, four hydrogen ions are translocated across the cytoplasmic membrane), and thus conserves the redox energy in a proton gradient. The chain is NADH-quinone oxidoreductase subunit D from Burkholderia ambifaria (strain MC40-6).